The primary structure comprises 219 residues: MSDYITFALPKGRIMRDSMELFAKIGITCPEMSGDSRKLVFENPETKFRFMAVRATDVPTYVEYGCADLGVVGKDTLLEQGKDLYEPLDLKFGYCRLVVAEPGELSRDEDPADWSNIRVATKYPNITERYFAERGVQVELIKLYGSIELAPLVGLAERIVDLVSTGATMRDNGLVEVETIGEITSRLIVNRASLKTKHQRITRIIQDLERVLAEDAGND.

The protein belongs to the ATP phosphoribosyltransferase family. Short subfamily. As to quaternary structure, heteromultimer composed of HisG and HisZ subunits.

The protein resides in the cytoplasm. It carries out the reaction 1-(5-phospho-beta-D-ribosyl)-ATP + diphosphate = 5-phospho-alpha-D-ribose 1-diphosphate + ATP. The protein operates within amino-acid biosynthesis; L-histidine biosynthesis; L-histidine from 5-phospho-alpha-D-ribose 1-diphosphate: step 1/9. Functionally, catalyzes the condensation of ATP and 5-phosphoribose 1-diphosphate to form N'-(5'-phosphoribosyl)-ATP (PR-ATP). Has a crucial role in the pathway because the rate of histidine biosynthesis seems to be controlled primarily by regulation of HisG enzymatic activity. This is ATP phosphoribosyltransferase from Syntrophotalea carbinolica (strain DSM 2380 / NBRC 103641 / GraBd1) (Pelobacter carbinolicus).